A 325-amino-acid chain; its full sequence is MAASCVLLHTGQKMPLIGLGTWKSEPGQVKAAVKYALSVGYRHIDCAAIYGNEPEIGEALKEDVGPGKAVPREELFVTSKLWNTKHHPEDVEPALRKTLADLQLEYLDLYLMHWPYAFERGDNPFPKNADGTICYDSTHYKETWKALEALVAKGLVQALGLSNFNSRQIDDILSVASVRPAVLQVECHPYLAQNELIAHCQARGLEVTAYSPLGSSDRAWRDPDEPVLLEEPVVLALAEKYGRSPAQILLRWQVQRKVICIPKSITPSRILQNIKVFDFTFSPEEMKQLNALNKNWRYIVPMLTVDGKRVPRDAGHPLYPFNDPY.

An N-acetylalanine modification is found at Ala2. Ser4 carries the phosphoserine modification. NADP(+) is bound by residues 11-20 (GQKMPLIGLG), Thr21, and Trp22. Ser38 is subject to Phosphoserine. Position 45 (Asp45) interacts with NADP(+). The Proton donor role is filled by Tyr50. The residue at position 127 (Lys127) is an N6-acetyllysine; alternate. The residue at position 127 (Lys127) is an N6-succinyllysine; alternate. Lys145 carries the post-translational modification N6-succinyllysine. NADP(+)-binding residues include Ser162, Asn163, Ser211, Leu213, Ser215, Ser216, Lys263, Ser264, Ile265, Thr266, Arg269, Gln272, and Asn273. At Ser211 the chain carries Phosphoserine.

This sequence belongs to the aldo/keto reductase family. Monomer. Widely expressed. Highly expressed in kidney, salivary gland and liver. Detected in trachea, stomach, brain, lung, prostate, placenta, mammary gland, small intestine and lung.

The protein resides in the cytoplasm. It localises to the cytosol. It is found in the apical cell membrane. It carries out the reaction a primary alcohol + NADP(+) = an aldehyde + NADPH + H(+). It catalyses the reaction allyl alcohol + NADP(+) = acrolein + NADPH + H(+). The catalysed reaction is glycerol + NADP(+) = D-glyceraldehyde + NADPH + H(+). The enzyme catalyses glycerol + NADP(+) = L-glyceraldehyde + NADPH + H(+). It carries out the reaction hydroxyacetone + NADP(+) = methylglyoxal + NADPH + H(+). It catalyses the reaction a 4-hydroxynonen-1-ol + NADP(+) = a 4-hydroxynonenal + NADPH + H(+). The catalysed reaction is 3-deoxyfructose + NADP(+) = 3-deoxyglucosone + NADPH + H(+). The enzyme catalyses L-gulonate + NADP(+) = aldehydo-D-glucuronate + NADPH + H(+). It carries out the reaction L-gulono-1,4-lactone + NADP(+) = D-glucurono-3,6-lactone + NADPH + H(+). It catalyses the reaction pyridine 3-methanol + NADP(+) = pyridine-3-carbaldehyde + NADPH + H(+). The catalysed reaction is S-nitroso-CoA + NADPH + H(+) = sulfinamide-CoA + NADP(+). The enzyme catalyses S-nitrosoglutathione + NADPH + H(+) = S-(hydroxysulfenamide)glutathione + NADP(+). Its function is as follows. Catalyzes the NADPH-dependent reduction of a wide variety of carbonyl-containing compounds to their corresponding alcohols. Displays enzymatic activity towards endogenous metabolites such as aromatic and aliphatic aldehydes, ketones, monosaccharides and bile acids, with a preference for negatively charged substrates, such as glucuronate and succinic semialdehyde. Functions as a detoxifiying enzyme by reducing a range of toxic aldehydes. Reduces methylglyoxal and 3-deoxyglucosone, which are present at elevated levels under hyperglycemic conditions and are cytotoxic. Involved also in the detoxification of lipid-derived aldehydes like acrolein. Plays a role in the activation of procarcinogens, such as polycyclic aromatic hydrocarbon trans-dihydrodiols, and in the metabolism of various xenobiotics and drugs, including the anthracyclines doxorubicin (DOX) and daunorubicin (DAUN). Also acts as an inhibitor of protein S-nitrosylation by mediating degradation of S-nitroso-coenzyme A (S-nitroso-CoA), a cofactor required to S-nitrosylate proteins. S-nitroso-CoA reductase activity is involved in reprogramming intermediary metabolism in renal proximal tubules, notably by inhibiting protein S-nitrosylation of isoform 2 of PKM (PKM2). Also acts as a S-nitroso-glutathione reductase by catalyzing the NADPH-dependent reduction of S-nitrosoglutathione. Displays no reductase activity towards retinoids. The polypeptide is Aldo-keto reductase family 1 member A1 (AKR1A1) (Homo sapiens (Human)).